The chain runs to 111 residues: UPF0342 protein SAG1376 (111 aa).

Over residues glutamine 52 to glutamine 63 the composition is skewed to polar residues. The segment at glutamine 52–lysine 71 is disordered.

Belongs to the UPF0342 family.

The protein is UPF0342 protein SAG1376 of Streptococcus agalactiae serotype V (strain ATCC BAA-611 / 2603 V/R).